Reading from the N-terminus, the 69-residue chain is Light-harvesting protein B-1015 alpha chain (69 aa).

The Cytoplasmic portion of the chain corresponds to 2–20 (ATEYRTASWKLWLILDPRR). The helical transmembrane segment at 21–41 (VLTALFVYLTVIALLIHFGLL) threads the bilayer. H37 is an a bacteriochlorophyll binding site. At 42 to 59 (STDRLNWWEFQRGLPKAA) the chain is on the periplasmic side. The propeptide occupies 60–69 (SLVVVPPAVG).

This sequence belongs to the antenna complex alpha subunit family. In terms of assembly, the core complex is formed by different alpha and beta chains, binding bacteriochlorophyll molecules, and arranged most probably in tetrameric structures disposed around the reaction center. The non-pigmented gamma chains may constitute additional components.

It is found in the cell inner membrane. Functionally, antenna complexes are light-harvesting systems, which transfer the excitation energy to the reaction centers. This chain is Light-harvesting protein B-1015 alpha chain (pufA), found in Blastochloris viridis (Rhodopseudomonas viridis).